A 588-amino-acid chain; its full sequence is Probable urocanate hydratase (588 aa).

Over residues 1–15 (MDTPSAAAETSEPSA) the composition is skewed to low complexity. The segment at 1-22 (MDTPSAAAETSEPSAQWQAYRG) is disordered. NAD(+) contacts are provided by residues 62-63 (GG), Gln140, 188-190 (GMG), Glu208, Arg213, 254-255 (NA), 275-279 (QTSAH), and Tyr334. Residue Cys431 is part of the active site. Gly520 serves as a coordination point for NAD(+).

The protein belongs to the urocanase family. NAD(+) serves as cofactor.

It is found in the cytoplasm. The catalysed reaction is 4-imidazolone-5-propanoate = trans-urocanate + H2O. The protein operates within amino-acid degradation; L-histidine degradation into L-glutamate; N-formimidoyl-L-glutamate from L-histidine: step 2/3. Functionally, catalyzes the conversion of urocanate to 4-imidazolone-5-propionate. This Halobacterium salinarum (strain ATCC 29341 / DSM 671 / R1) protein is Probable urocanate hydratase.